A 129-amino-acid polypeptide reads, in one-letter code: Small ribosomal subunit protein uS12 (129 aa).

Aspartate 89 bears the 3-methylthioaspartic acid mark. Residues 110 to 129 (RKQGRSRYGAPRKQVVATKK) form a disordered region.

It belongs to the universal ribosomal protein uS12 family. In terms of assembly, part of the 30S ribosomal subunit. Contacts proteins S8 and S17. May interact with IF1 in the 30S initiation complex.

Functionally, with S4 and S5 plays an important role in translational accuracy. Its function is as follows. Interacts with and stabilizes bases of the 16S rRNA that are involved in tRNA selection in the A site and with the mRNA backbone. Located at the interface of the 30S and 50S subunits, it traverses the body of the 30S subunit contacting proteins on the other side and probably holding the rRNA structure together. The combined cluster of proteins S8, S12 and S17 appears to hold together the shoulder and platform of the 30S subunit. In Rickettsia bellii (strain RML369-C), this protein is Small ribosomal subunit protein uS12.